A 122-amino-acid chain; its full sequence is Large ribosomal subunit protein uL14 (122 aa).

The protein belongs to the universal ribosomal protein uL14 family. Part of the 50S ribosomal subunit. Forms a cluster with proteins L3 and L19. In the 70S ribosome, L14 and L19 interact and together make contacts with the 16S rRNA in bridges B5 and B8.

Binds to 23S rRNA. Forms part of two intersubunit bridges in the 70S ribosome. This Acinetobacter baumannii (strain AB307-0294) protein is Large ribosomal subunit protein uL14.